Consider the following 301-residue polypeptide: GTPase Era (301 aa).

An Era-type G domain is found at 8-174; that stretch reads KSGFVALVGR…LKTLKDYLPE (167 aa). The interval 16–23 is G1; the sequence is GRPNVGKS. 16-23 contacts GTP; the sequence is GRPNVGKS. The G2 stretch occupies residues 42–46; sequence QTTRN. The G3 stretch occupies residues 63–66; sequence DTPG. Residues 63-67 and 124-127 each bind GTP; these read DTPGI and NKID. Residues 124–127 form a G4 region; sequence NKID. Residues 153–155 are G5; that stretch reads ISA. One can recognise a KH type-2 domain in the interval 197 to 282; that stretch reads IREQILRLTD…NLKLWVKVRR (86 aa).

Belongs to the TRAFAC class TrmE-Era-EngA-EngB-Septin-like GTPase superfamily. Era GTPase family. As to quaternary structure, monomer.

The protein resides in the cytoplasm. The protein localises to the cell membrane. In terms of biological role, an essential GTPase that binds both GDP and GTP, with rapid nucleotide exchange. Plays a role in 16S rRNA processing and 30S ribosomal subunit biogenesis and possibly also in cell cycle regulation and energy metabolism. This chain is GTPase Era, found in Lactobacillus delbrueckii subsp. bulgaricus (strain ATCC 11842 / DSM 20081 / BCRC 10696 / JCM 1002 / NBRC 13953 / NCIMB 11778 / NCTC 12712 / WDCM 00102 / Lb 14).